Here is a 659-residue protein sequence, read N- to C-terminus: WD repeat-containing protein 48 homolog (659 aa).

8 WD repeats span residues arginine 27–proline 66, histidine 73–threonine 112, threonine 115–alanine 154, glycine 166–lysine 205, glycine 208–threonine 247, valine 250–leucine 289, glutamate 292–phenylalanine 331, and lysine 337–aspartate 376. The disordered stretch occupies residues alanine 592–serine 613. Positions asparagine 596–serine 610 are enriched in low complexity.

The protein belongs to the WD repeat WDR48 family. As to quaternary structure, catalytic component of the Usp12-46 deubiquitylase complex consisting of Usp12-46, Wdr20 and Uaf1; regulatory subunit that, together wtih Wdr20, stabilizes Usp12-46. The Usp12-46 deubiquitylase complex associates with arr/arrow; the interaction leads to deubiquitination and stabilization of arr/arrow.

Its function is as follows. Regulatory component of the Usp12-46 deubiquitylase complex. activates deubiquitination by increasing the catalytic turnover without increasing the affinity of deubiquitinating enzymes for the substrate. The complex deubiquitylates the wg/wingless-signaling receptor arr/arrow, which stabilizes the receptor and increases its concentration at the cell surface; this enhances the sensitivity of cells to wg/wingless-signal stimulation. This increases the amplitude and spatial range of the signaling response to the wg/wingless morphogen gradient, facilitating the precise concentration-dependent regulation of its target genes. Together with Wdr20 and Usp12-46 required for wg/wingless-mediated signaling in the wing imaginal disc and for wg/wingless-dependent regulation of intestinal stem cell proliferation. The polypeptide is WD repeat-containing protein 48 homolog (Aedes aegypti (Yellowfever mosquito)).